The sequence spans 856 residues: Envelope glycoprotein gp150 (856 aa).

The Extracellular segment spans residues Met-1–Lys-785. 19 N-linked (GlcNAc...) asparagine; by host glycosylation sites follow: Asn-220, Asn-258, Asn-269, Asn-274, Asn-298, Asn-330, Asn-336, Asn-342, Asn-418, Asn-422, Asn-448, Asn-469, Asn-481, Asn-499, Asn-518, Asn-531, Asn-548, Asn-551, and Asn-556. Residues Val-616 to Ile-636 form a fusion peptide region. Residues His-643–Ala-693 are a coiled coil. The tract at residues Ile-662–Lys-680 is immunosuppression. 4 N-linked (GlcNAc...) asparagine; by host glycosylation sites follow: Asn-717, Asn-721, Asn-729, and Asn-737. Residues Tyr-736 to Asp-772 adopt a coiled-coil conformation. Residues Gly-786 to Pro-806 form a helical membrane-spanning segment. Over Thr-807–Glu-856 the chain is Cytoplasmic.

In terms of assembly, the mature envelope protein (Env) consists of a trimer of SU-TM heterodimers attached by noncovalent interactions or by a labile interchain disulfide bond. Specific enzymatic cleavages in vivo yield mature proteins. Envelope glycoproteins are synthesized as an inactive precursor that is N-glycosylated and processed likely by host cell furin or by a furin-like protease in the Golgi to yield the mature SU and TM proteins. The cleavage site between SU and TM requires the minimal sequence [KR]-X-[KR]-R.

It localises to the virion membrane. It is found in the host cell membrane. The surface protein (SU) attaches the virus to the host cell by binding to its receptor. This interaction triggers the refolding of the transmembrane protein (TM) and is thought to activate its fusogenic potential by unmasking its fusion peptide. Fusion occurs at the host cell plasma membrane. Functionally, the transmembrane protein (TM) acts as a class I viral fusion protein. Under the current model, the protein has at least 3 conformational states: pre-fusion native state, pre-hairpin intermediate state, and post-fusion hairpin state. During viral and target cell membrane fusion, the coiled coil regions (heptad repeats) assume a trimer-of-hairpins structure, positioning the fusion peptide in close proximity to the C-terminal region of the ectodomain. The formation of this structure appears to drive apposition and subsequent fusion of viral and target cell membranes. Membranes fusion leads to delivery of the nucleocapsid into the cytoplasm. The polypeptide is Envelope glycoprotein gp150 (env) (Feline immunodeficiency virus (strain UT-113) (FIV)).